A 237-amino-acid polypeptide reads, in one-letter code: Small ribosomal subunit protein eS4 (237 aa).

The region spanning 37 to 99 is the S4 RNA-binding domain; that stretch reads VPLLIVLRDV…REEYYRIFPD (63 aa).

Belongs to the eukaryotic ribosomal protein eS4 family.

The polypeptide is Small ribosomal subunit protein eS4 (Natronomonas pharaonis (strain ATCC 35678 / DSM 2160 / CIP 103997 / JCM 8858 / NBRC 14720 / NCIMB 2260 / Gabara) (Halobacterium pharaonis)).